We begin with the raw amino-acid sequence, 389 residues long: Large envelope protein (389 aa).

Composition is skewed to polar residues over residues 1–10 (MGQNLSTSNP) and 85–95 (STNRQTGRQPT). Disordered regions lie at residues 1–54 (MGQN…AFGL) and 73–106 (ILHTVPANPPPASTNRQTGRQPTPLSPPLRDTHP). A lipid anchor (N-myristoyl glycine; by host) is attached at Gly-2. A pre-S1 region spans residues 2-108 (GQNLSTSNPL…PPLRDTHPQA (107 aa)). The pre-S stretch occupies residues 2–163 (GQNLSTSNPL…FSRIGDPVTN (162 aa)). Residues 2 to 170 (GQNLSTSNPL…VTNMENITSG (169 aa)) are Virion surface; in external conformation-facing. The Intravirion; in internal conformation portion of the chain corresponds to 2–242 (GQNLSTSNPL…PGYRWMCLRG (241 aa)). The interval 109–163 (VQWNSTTFHQTLQDPRVRGLYFPAGGSSSGTVNPVPTTASPLSSIFSRIGDPVTN) is pre-S2. Residues 171 to 191 (FLGPLLVLQAGFFLLTRILTI) traverse the membrane as a helical segment. Residues 192-242 (PQSLDSWWTSLNFRGGTTVCLGQNSQSPTSNHSPTSCPPTCPGYRWMCLRG) are Intravirion; in external conformation-facing. A helical membrane pass occupies residues 243–263 (FIIFLFILLLCLIFLLVLLEY). Residues 264-337 (QGMLHVCPLI…WASVRFSWLS (74 aa)) lie on the Virion surface side of the membrane. Asn-309 carries N-linked (GlcNAc...) asparagine; by host glycosylation. Residues 338–358 (LLVPFVQWFVGLSPTVWLSAI) traverse the membrane as a helical segment. The Intravirion segment spans residues 359–364 (WMMWYW). A helical membrane pass occupies residues 365–387 (GPSLYSILSPFLPLLPIFFCLWV). At 388 to 389 (YI) the chain is on the virion surface side.

It belongs to the orthohepadnavirus major surface antigen family. In terms of assembly, li-HBsAg interacts with capsid protein and with HDV Large delta antigen. Isoform M associates with host chaperone CANX through its pre-S2 N glycan. This association may be essential for M proper secretion. Post-translationally, isoform M is N-terminally acetylated by host at a ratio of 90%, and N-glycosylated by host at the pre-S2 region. In terms of processing, myristoylated.

The protein resides in the virion membrane. The large envelope protein exists in two topological conformations, one which is termed 'external' or Le-HBsAg and the other 'internal' or Li-HBsAg. In its external conformation the protein attaches the virus to cell receptors and thereby initiating infection. This interaction determines the species specificity and liver tropism. This attachment induces virion internalization predominantly through caveolin-mediated endocytosis. The large envelope protein also assures fusion between virion membrane and endosomal membrane. In its internal conformation the protein plays a role in virion morphogenesis and mediates the contact with the nucleocapsid like a matrix protein. Its function is as follows. The middle envelope protein plays an important role in the budding of the virion. It is involved in the induction of budding in a nucleocapsid independent way. In this process the majority of envelope proteins bud to form subviral lipoprotein particles of 22 nm of diameter that do not contain a nucleocapsid. This chain is Large envelope protein, found in Homo sapiens (Human).